Consider the following 465-residue polypeptide: Midnolin (465 aa).

Residues 32–106 (MSLAIHSTTG…LTLVPTVEAG (75 aa)) form the Ubiquitin-like domain. Disordered regions lie at residues 185–262 (SVAT…SRKP) and 400–445 (RLRR…GLDF). Low complexity-rich tracts occupy residues 195 to 219 (RPVSSAARVPPVSSSPSSPVSPSPV) and 240 to 257 (SPPASSSSTSTPGSSPTP). Residues 397–424 (QQKRLRRKARRDARGPYHWTPSRKAGRS) form a required for nucleolar localization region.

Interacts with GCK; the interaction occurs preferentially at low glucose levels. Interacts with the proteasome. Expressed at high levels in brain and liver with significantly lower levels in muscle.

The protein resides in the nucleus. It localises to the cytoplasm. It is found in the cytosol. Its subcellular location is the nucleolus. Its function is as follows. Facilitates the ubiquitin-independent proteasomal degradation of stimulus-induced transcription factors such as FOSB, EGR1, NR4A1, and IRF4 to the proteasome for degradation. Promotes also the degradation of other substrates such as CBX4. Plays a role in inhibiting the activity of glucokinase GCK and both glucose-induced and basal insulin secretion. The polypeptide is Midnolin (Midn) (Mus musculus (Mouse)).